The following is a 552-amino-acid chain: CCR4-NOT transcription complex subunit 6 (552 aa).

LRR repeat units follow at residues 52–73, 75–96, 98–120, and 121–143; these read HLTA…IAKL, NLVY…LGNM, SLRE…GKLF, and QLQT…CLEP. Residues 153 to 552 form a nuclease domain region; the sequence is LLDNLSVSTE…VNGIHLPGRR (400 aa). E235 contributes to the Mg(2+) binding site. Substrate contacts are provided by E235, E271, H356, and P361. D407 contributes to the Mg(2+) binding site. D407 (proton donor/acceptor) is an active-site residue. Residues N409, N476, and F481 each coordinate substrate.

This sequence belongs to the CCR4/nocturin family. In terms of assembly, subunit of the CCR4-NOT core complex. It depends on Mg(2+) as a cofactor.

Its subcellular location is the cytoplasm. It is found in the nucleus. It catalyses the reaction Exonucleolytic cleavage of poly(A) to 5'-AMP.. Functionally, poly(A) nuclease involved in mRNA decay. Has 3'-5' RNase activity. The CCR4-NOT complex functions as a general transcription regulation complex. Enhances ligand-dependent transcriptional activity of nuclear hormone receptors. This Xenopus laevis (African clawed frog) protein is CCR4-NOT transcription complex subunit 6 (cnot6).